Reading from the N-terminus, the 445-residue chain is Phosphoglucosamine mutase (445 aa).

The active-site Phosphoserine intermediate is the Ser102. Residues Ser102, Asp241, Asp243, and Asp245 each contribute to the Mg(2+) site. Ser102 carries the post-translational modification Phosphoserine.

This sequence belongs to the phosphohexose mutase family. Mg(2+) is required as a cofactor. Post-translationally, activated by phosphorylation.

It carries out the reaction alpha-D-glucosamine 1-phosphate = D-glucosamine 6-phosphate. Catalyzes the conversion of glucosamine-6-phosphate to glucosamine-1-phosphate. In Escherichia coli O81 (strain ED1a), this protein is Phosphoglucosamine mutase.